The chain runs to 674 residues: Pesticidal crystal protein Cry24Aa (674 aa).

It belongs to the delta endotoxin family.

Promotes colloidosmotic lysis by binding to the midgut epithelial cells of insects. The protein is Pesticidal crystal protein Cry24Aa (cry24Aa) of Bacillus thuringiensis subsp. jegathesan.